The primary structure comprises 900 residues: MPRKLFSKMPTTQGRSFYEELRGHDSEGYDGGSRAGLLDEENLNHNFQDYDLDHAEGLTVDDSRATLAGLRKTPASKVPPGHQNDRSMWLAHDDDADNDVPPSLLVEPRGAHLAGKPKRKQSRQAAYTMPGSSNTRAQWETIQAHQPLHNDEPFTQSHRGNGAPGSLFSGSASLDAKKMAEWRWANVQNLDKFIKEVYDYYRGCGIKAIITERVLHLGNVAFIAVLLTFLTQCVDYSLVRGSQKLSQIIVPQCTRKMSGWWNLGLWLFAFYFIWKAIQYILDLHRLFHVRDFYTHLLNIPDHDMQTITWQEVVARVMALRNQNSKTATTLTPLQRHFIGSQSKERLDASDIANRIMRRENYLIALFNKDILDLTIPLPFLRNRQYFSRTLEWTLMFSVLDMVFDEKGQVNQKFLRADRRGEISEKLRSRFQFAGIMILVLSPFVSLYLVIYYFLMYYHEIQKNPSVLSSRSYTPLAEWKFREFNELPHLFQKRLDMSKAFATHYMDQFPKVKTEMVAKSVAFVSGALATVLAIASVFDPELFLGFEITPDRTVLFYTAIFGSIWAVAHGMQSQDDVVFDPEYAMRNVIEYTHYEPDHWKDRLHSYDIKLEFAELYKPKIVIFLEEILGILTTPFVLFFSLPKCSDQIIDFFREFTLHIDGLGYVCTFAEFDFKKAMANAKKPSDGGDVRDEYYSAKHGKMEASYYGFIGNYGNFALNPKGAPGSHLPPGMRNQFHPPPAWPGLNSPPLGADMQTSRMGRSEFRSRSRAPGQGLRPGPSMVAPSPMASILLDPHHLPPSHLVNPGRASHPHRVQQNRRPGESNIIEESLEDEERGREGVNRHDDEEVYGHGDGMDESAWQTSPARTLSRDNSAIEGTGTAEAGVVDMIYQFNQAQFTRNGV.

Over 1-213 (MPRKLFSKMP…CGIKAIITER (213 aa)) the chain is Cytoplasmic. A disordered region spans residues 111–134 (AHLAGKPKRKQSRQAAYTMPGSSN). The chain crosses the membrane as a helical span at residues 214–234 (VLHLGNVAFIAVLLTFLTQCV). Topologically, residues 235 to 262 (DYSLVRGSQKLSQIIVPQCTRKMSGWWN) are lumenal. Residues 263–283 (LGLWLFAFYFIWKAIQYILDL) form a helical membrane-spanning segment. Topologically, residues 284-434 (HRLFHVRDFY…KLRSRFQFAG (151 aa)) are cytoplasmic. The stretch at 435–455 (IMILVLSPFVSLYLVIYYFLM) is an intramembrane region. Residues 456-524 (YYHEIQKNPS…MVAKSVAFVS (69 aa)) are Cytoplasmic-facing. A helical membrane pass occupies residues 525 to 545 (GALATVLAIASVFDPELFLGF). The Lumenal portion of the chain corresponds to 546–551 (EITPDR). The chain crosses the membrane as a helical span at residues 552 to 572 (TVLFYTAIFGSIWAVAHGMQS). The Cytoplasmic segment spans residues 573–618 (QDDVVFDPEYAMRNVIEYTHYEPDHWKDRLHSYDIKLEFAELYKPK). The stretch at 619–639 (IVIFLEEILGILTTPFVLFFS) is an intramembrane region. Over 640–900 (LPKCSDQIID…NQAQFTRNGV (261 aa)) the chain is Cytoplasmic. The disordered stretch occupies residues 723-873 (GSHLPPGMRN…RTLSRDNSAI (151 aa)). Residues 832 to 852 (ERGREGVNRHDDEEVYGHGDG) show a composition bias toward basic and acidic residues. The span at 857–870 (AWQTSPARTLSRDN) shows a compositional bias: polar residues.

Belongs to the ATG9 family. In terms of assembly, homotrimer; forms a homotrimer with a central pore that forms a path between the two membrane leaflets. In terms of processing, phosphorylated by ATG1. ATG1 phosphorylation is required for preautophagosome elongation.

It localises to the preautophagosomal structure membrane. The protein localises to the cytoplasmic vesicle membrane. Its subcellular location is the golgi apparatus membrane. It is found in the endoplasmic reticulum membrane. It carries out the reaction a 1,2-diacyl-sn-glycero-3-phosphocholine(in) = a 1,2-diacyl-sn-glycero-3-phosphocholine(out). The enzyme catalyses a 1,2-diacyl-sn-glycero-3-phospho-L-serine(in) = a 1,2-diacyl-sn-glycero-3-phospho-L-serine(out). The catalysed reaction is a 1,2-diacyl-sn-glycero-3-phosphoethanolamine(in) = a 1,2-diacyl-sn-glycero-3-phosphoethanolamine(out). It catalyses the reaction a 1,2-diacyl-sn-glycero-3-phospho-(1D-myo-inositol-3-phosphate)(in) = a 1,2-diacyl-sn-glycero-3-phospho-(1D-myo-inositol-3-phosphate)(out). Its function is as follows. Phospholipid scramblase involved in autophagy and cytoplasm to vacuole transport (Cvt) vesicle formation. Cycles between the preautophagosomal structure/phagophore assembly site (PAS) and the cytoplasmic vesicle pool and supplies membrane for the growing autophagosome. Lipid scramblase activity plays a key role in preautophagosomal structure/phagophore assembly by distributing the phospholipids that arrive through ATG2 from the cytoplasmic to the luminal leaflet of the bilayer, thereby driving autophagosomal membrane expansion. Required for mitophagy. Also involved in endoplasmic reticulum-specific autophagic process and is essential for the survival of cells subjected to severe ER stress. Different machineries are required for anterograde trafficking to the PAS during either the Cvt pathway or bulk autophagy and for retrograde trafficking. The sequence is that of Autophagy-related protein 9 (ATG9) from Podospora anserina (Pleurage anserina).